Consider the following 227-residue polypeptide: Cytochrome c oxidase subunit 2 (227 aa).

The Mitochondrial intermembrane portion of the chain corresponds to 1–26 (MSTWKNLFLQDSASPLMELLMCFHDH). The helical transmembrane segment at 27–48 (AMLILILITIMVSQMLLSMLFN) threads the bilayer. Topologically, residues 49-62 (KLSHRYLLEGQLIE) are mitochondrial matrix. Residues 63–82 (TIWTIIPAIILILIALPSLR) traverse the membrane as a helical segment. The Mitochondrial intermembrane segment spans residues 83-227 (LLYILDEINN…LFLNWVISKA (145 aa)). His-161, Cys-196, Glu-198, Cys-200, His-204, and Met-207 together coordinate Cu cation. Residue Glu-198 participates in Mg(2+) binding.

The protein belongs to the cytochrome c oxidase subunit 2 family. In terms of assembly, component of the cytochrome c oxidase (complex IV, CIV), a multisubunit enzyme composed of a catalytic core of 3 subunits and several supernumerary subunits. The complex exists as a monomer or a dimer and forms supercomplexes (SCs) in the inner mitochondrial membrane with ubiquinol-cytochrome c oxidoreductase (cytochrome b-c1 complex, complex III, CIII). The cofactor is Cu cation.

It localises to the mitochondrion inner membrane. The catalysed reaction is 4 Fe(II)-[cytochrome c] + O2 + 8 H(+)(in) = 4 Fe(III)-[cytochrome c] + 2 H2O + 4 H(+)(out). In terms of biological role, component of the cytochrome c oxidase, the last enzyme in the mitochondrial electron transport chain which drives oxidative phosphorylation. The respiratory chain contains 3 multisubunit complexes succinate dehydrogenase (complex II, CII), ubiquinol-cytochrome c oxidoreductase (cytochrome b-c1 complex, complex III, CIII) and cytochrome c oxidase (complex IV, CIV), that cooperate to transfer electrons derived from NADH and succinate to molecular oxygen, creating an electrochemical gradient over the inner membrane that drives transmembrane transport and the ATP synthase. Cytochrome c oxidase is the component of the respiratory chain that catalyzes the reduction of oxygen to water. Electrons originating from reduced cytochrome c in the intermembrane space (IMS) are transferred via the dinuclear copper A center (CU(A)) of subunit 2 and heme A of subunit 1 to the active site in subunit 1, a binuclear center (BNC) formed by heme A3 and copper B (CU(B)). The BNC reduces molecular oxygen to 2 water molecules using 4 electrons from cytochrome c in the IMS and 4 protons from the mitochondrial matrix. This is Cytochrome c oxidase subunit 2 (COII) from Sitophilus granarius (Granary weevil).